The primary structure comprises 511 residues: GMP synthase [glutamine-hydrolyzing] (511 aa).

The region spanning 6-196 (LVLVLDFGSQ…VFDVCGCTGD (191 aa)) is the Glutamine amidotransferase type-1 domain. The active-site Nucleophile is the Cys-83. Residues His-170 and Glu-172 contribute to the active site. In terms of domain architecture, GMPS ATP-PPase spans 197–386 (WSIENFIDME…LGVPDRIVWR (190 aa)). 224–230 (SGGVDSS) provides a ligand contact to ATP.

In terms of assembly, homodimer.

The enzyme catalyses XMP + L-glutamine + ATP + H2O = GMP + L-glutamate + AMP + diphosphate + 2 H(+). It participates in purine metabolism; GMP biosynthesis; GMP from XMP (L-Gln route): step 1/1. Catalyzes the synthesis of GMP from XMP. This Oceanobacillus iheyensis (strain DSM 14371 / CIP 107618 / JCM 11309 / KCTC 3954 / HTE831) protein is GMP synthase [glutamine-hydrolyzing].